A 280-amino-acid chain; its full sequence is MRSNVHQGHVARKRFGQNFLVDDTIIHGIVNAISPQADDVLVEIGPGLGALTDPLLERIPQMQVVELDRDLVERLRRRYGERLQVHAGDALAFDFDKLAVPGRPLRIVGNLPYNISSPLLFHLMDFADHVRDQHFMLQKEVVERMVAEPGSKAFGRLSIMLQVRYYMEHVLDVPPGAFNPPPKVDSAVVRMIPWPRHSDGRLRSPHADCDITVLGDVVTAAFSQRRKVLRNTLSFLRDQVDFDAMGFDLGRRAEEVPVGEYVELARRLGGTPSGRAGQAA.

Residues Asn18, Leu20, Gly45, Glu66, Asp89, and Asn110 each contribute to the S-adenosyl-L-methionine site.

It belongs to the class I-like SAM-binding methyltransferase superfamily. rRNA adenine N(6)-methyltransferase family. RsmA subfamily.

It is found in the cytoplasm. The catalysed reaction is adenosine(1518)/adenosine(1519) in 16S rRNA + 4 S-adenosyl-L-methionine = N(6)-dimethyladenosine(1518)/N(6)-dimethyladenosine(1519) in 16S rRNA + 4 S-adenosyl-L-homocysteine + 4 H(+). Functionally, specifically dimethylates two adjacent adenosines (A1518 and A1519) in the loop of a conserved hairpin near the 3'-end of 16S rRNA in the 30S particle. May play a critical role in biogenesis of 30S subunits. This Cupriavidus necator (strain ATCC 17699 / DSM 428 / KCTC 22496 / NCIMB 10442 / H16 / Stanier 337) (Ralstonia eutropha) protein is Ribosomal RNA small subunit methyltransferase A.